The following is a 237-amino-acid chain: Pyridoxine 5'-phosphate synthase (237 aa).

2 residues coordinate 3-amino-2-oxopropyl phosphate: N7 and R18. H43 serves as the catalytic Proton acceptor. 2 residues coordinate 1-deoxy-D-xylulose 5-phosphate: R45 and H50. Catalysis depends on E70, which acts as the Proton acceptor. A 1-deoxy-D-xylulose 5-phosphate-binding site is contributed by T100. H190 acts as the Proton donor in catalysis. 3-amino-2-oxopropyl phosphate-binding positions include D191 and 213 to 214; that span reads GH.

The protein belongs to the PNP synthase family. As to quaternary structure, homooctamer; tetramer of dimers.

It localises to the cytoplasm. The enzyme catalyses 3-amino-2-oxopropyl phosphate + 1-deoxy-D-xylulose 5-phosphate = pyridoxine 5'-phosphate + phosphate + 2 H2O + H(+). Its pathway is cofactor biosynthesis; pyridoxine 5'-phosphate biosynthesis; pyridoxine 5'-phosphate from D-erythrose 4-phosphate: step 5/5. Its function is as follows. Catalyzes the complicated ring closure reaction between the two acyclic compounds 1-deoxy-D-xylulose-5-phosphate (DXP) and 3-amino-2-oxopropyl phosphate (1-amino-acetone-3-phosphate or AAP) to form pyridoxine 5'-phosphate (PNP) and inorganic phosphate. The chain is Pyridoxine 5'-phosphate synthase from Bacteroides thetaiotaomicron (strain ATCC 29148 / DSM 2079 / JCM 5827 / CCUG 10774 / NCTC 10582 / VPI-5482 / E50).